The chain runs to 163 residues: Nucleotide-binding protein BA_1166 (163 aa).

It belongs to the YajQ family.

Nucleotide-binding protein. This Bacillus anthracis protein is Nucleotide-binding protein BA_1166.